A 1441-amino-acid chain; its full sequence is Remodeling and spacing factor 1 (1441 aa).

A DDT domain is found at 17–84; sequence PGSCPNFAVV…MRKIGKSVTA (68 aa). Glycyl lysine isopeptide (Lys-Gly) (interchain with G-Cter in SUMO2) cross-links involve residues lysine 136 and lysine 215. Positions 215–227 are enriched in polar residues; sequence KNSSQQDNSSRES. The tract at residues 215-283 is disordered; sequence KNSSQQDNSS…TTVKKEKEDE (69 aa). Serine 227 carries the phosphoserine modification. Composition is skewed to basic and acidic residues over residues 234–257 and 274–283; these read ETKK…KSEE and TTVKKEKEDE. Residues lysine 236, lysine 243, lysine 248, lysine 252, and lysine 254 each participate in a glycyl lysine isopeptide (Lys-Gly) (interchain with G-Cter in SUMO2) cross-link. A Glycyl lysine isopeptide (Lys-Gly) (interchain with G-Cter in SUMO1); alternate cross-link involves residue lysine 277. A Glycyl lysine isopeptide (Lys-Gly) (interchain with G-Cter in SUMO2); alternate cross-link involves residue lysine 277. Glycyl lysine isopeptide (Lys-Gly) (interchain with G-Cter in SUMO2) cross-links involve residues lysine 284, lysine 288, lysine 294, lysine 305, lysine 306, lysine 309, lysine 323, lysine 327, lysine 337, lysine 342, lysine 358, lysine 373, lysine 381, and lysine 390. A compositionally biased stretch (basic and acidic residues) spans 330–340; the sequence is RADPKDTKSSM. A disordered region spans residues 330–385; sequence RADPKDTKSSMEKPVAQEPERIEFGGNIKSSHEITEKSTEETEKLKNDQQAKIPLK. Over residues 359-378 the composition is skewed to basic and acidic residues; it reads SSHEITEKSTEETEKLKNDQ. Phosphoserine is present on residues serine 392 and serine 397. Residues lysine 400, lysine 405, lysine 415, and lysine 419 each participate in a glycyl lysine isopeptide (Lys-Gly) (interchain with G-Cter in SUMO2) cross-link. Residue serine 429 is modified to Phosphoserine. Lysine 439 is covalently cross-linked (Glycyl lysine isopeptide (Lys-Gly) (interchain with G-Cter in SUMO2)). Lysine 456 is covalently cross-linked (Glycyl lysine isopeptide (Lys-Gly) (interchain with G-Cter in SUMO1); alternate). A Glycyl lysine isopeptide (Lys-Gly) (interchain with G-Cter in SUMO2); alternate cross-link involves residue lysine 456. Glycyl lysine isopeptide (Lys-Gly) (interchain with G-Cter in SUMO2) cross-links involve residues lysine 463 and lysine 468. The segment covering 467–480 has biased composition (basic and acidic residues); it reads TKEESYSPSKDRNI. The disordered stretch occupies residues 467–634; that stretch reads TKEESYSPSK…AAETSPPSNI (168 aa). At serine 473 the chain carries Phosphoserine. Positions 482-498 are enriched in polar residues; sequence TEGNGTESLNSVITSMK. Lysine 498 is covalently cross-linked (Glycyl lysine isopeptide (Lys-Gly) (interchain with G-Cter in SUMO2)). Over residues 500-514 the composition is skewed to basic and acidic residues; that stretch reads GELEKETAPLRKDAD. The residue at position 524 (serine 524) is a Phosphoserine. Residues 552-562 are compositionally biased toward polar residues; it reads SKTALSSTESC. A Glycyl lysine isopeptide (Lys-Gly) (interchain with G-Cter in SUMO2) cross-link involves residue lysine 565. Residues 565-601 show a composition bias toward basic and acidic residues; it reads KGEEKSPKTKKDKRPPILECLEKLEKSKKTFLDKDAQ. Phosphoserine is present on residues serine 570 and serine 604. The segment covering 609–621 has biased composition (basic and acidic residues); sequence EVPKSTLESEKPG. Serine 622 is subject to Phosphoserine. Threonine 628 is subject to Phosphothreonine. Serine 629 is modified (phosphoserine). Glycyl lysine isopeptide (Lys-Gly) (interchain with G-Cter in SUMO2) cross-links involve residues lysine 662, lysine 663, lysine 670, lysine 677, lysine 698, and lysine 709. The tract at residues 675–887 is disordered; sequence FTKVEMDNLD…EEKESEEAIL (213 aa). Position 748 is a phosphoserine (serine 748). Basic and acidic residues-rich tracts occupy residues 753-770, 789-802, and 816-831; these read LEPE…EKTN, AEIR…KRGE, and KTDK…KDTN. Glycyl lysine isopeptide (Lys-Gly) (interchain with G-Cter in SUMO2) cross-links involve residues lysine 758, lysine 768, lysine 795, and lysine 799. The segment covering 864 to 873 has biased composition (low complexity); that stretch reads GSGSEKSSAA. A compositionally biased stretch (acidic residues) spans 874–887; it reads SEEEEEKESEEAIL. Serine 882 carries the phosphoserine modification. The PHD-type zinc finger occupies 891–941; the sequence is DEPCKKCGLPNHPELILLCDSCDSGYHTACLRPPLMIIPDGEWFCPPCQHK. The stretch at 942-1012 forms a coiled coil; the sequence is LLCEKLEEQL…SKANLLERRS (71 aa). Residues 983 to 1007 form a disordered region; that stretch reads PPQEPDFSEDQEEKKKDSKKSKANL. A Glycyl lysine isopeptide (Lys-Gly) (interchain with G-Cter in SUMO2) cross-link involves residue lysine 1039. Lysine 1050 carries the post-translational modification N6-acetyllysine. The interval 1063-1428 is disordered; that stretch reads ISTILDEERK…EEEEDELLRV (366 aa). 2 stretches are compositionally biased toward acidic residues: residues 1094 to 1107 and 1120 to 1141; these read LDSD…ESED and VVSD…DSDT. A phosphoserine mark is found at serine 1096, serine 1098, and serine 1105. Over residues 1146–1169 the composition is skewed to basic residues; sequence RRLRRHPSRPMRQSRRLRRKTPKK. Residues 1189 to 1199 are compositionally biased toward acidic residues; it reads SDFSDDFSDDF. Residues 1203 to 1212 are compositionally biased toward basic residues; sequence RRRRSRRNQK. Phosphoserine occurs at positions 1221, 1223, and 1226. Basic residues predominate over residues 1229-1244; the sequence is SLRRGKEIRRVHKRRL. Serine 1258 and serine 1277 each carry phosphoserine. Threonine 1278 bears the Phosphothreonine mark. Residues 1280–1292 show a composition bias toward acidic residues; sequence EYSEADEEEEEEE. Residue threonine 1305 is modified to Phosphothreonine. A phosphoserine mark is found at serine 1325 and serine 1336. A compositionally biased stretch (basic and acidic residues) spans 1335-1344; it reads ESTKKPYRIE. Lysine 1339 bears the N6-acetyllysine mark. Phosphoserine is present on residues serine 1345, serine 1359, and serine 1375. Residues 1394-1408 show a composition bias toward polar residues; sequence PKDNSTASASLASNG.

In terms of assembly, component of the RSF-1 ISWI chromatin-remodeling complex at least composed of SMARCA1 and RSF1. Within the RSF-1 ISWI chromatin-remodeling complex interacts with SMARCA1. Component of the RSF-5 ISWI chromatin-remodeling complex (also called the RSF complex) at least composed of SMARCA5/SNF2H and RSF1. Within the RSF-5 ISWI chromatin-remodeling complex interacts with SMARCA5/SNF2H; the interaction is direct. Identified in a centromere complex containing histones H2A, H2B and H4, and at least CENPA, CENPB, CENPC, CENPT, CENPN, HJURP, SUPT16H, SSRP1 and RSF1. Also binds the HBV pX/HBx protein, which is required to activate transcription of the viral genome. Phosphorylated. Ubiquitously expressed. Highly expressed in the heart, skeletal muscle, kidney and placenta. Expressed at low levels in the brain and colon.

Its subcellular location is the nucleus. Its function is as follows. Regulatory subunit of the ATP-dependent RSF-1 and RSF-5 ISWI chromatin-remodeling complexes, which form ordered nucleosome arrays on chromatin and facilitate access to DNA during DNA-templated processes such as DNA replication, transcription, and repair. Binds to core histones together with SMARCA5, and is required for the assembly of regular nucleosome arrays by the RSF-5 ISWI chromatin-remodeling complex. Directly stimulates the ATPase activity of SMARCA1 and SMARCA5 in the RSF-1 and RSF-5 ISWI chromatin-remodeling complexes, respectively. The RSF-1 ISWI chromatin remodeling complex has a lower ATP hydrolysis rate than the RSF-5 ISWI chromatin-remodeling complex. The complexes do not have the ability to slide mononucleosomes to the center of a DNA template. Facilitates transcription of hepatitis B virus (HBV) genes by the pX transcription activator. In case of infection by HBV, together with pX, it represses TNF-alpha induced NF-kappa-B transcription activation. Represses transcription when artificially recruited to chromatin by fusion to a heterogeneous DNA binding domain. The sequence is that of Remodeling and spacing factor 1 (RSF1) from Homo sapiens (Human).